We begin with the raw amino-acid sequence, 235 residues long: Probable GTP-binding protein EngB (235 aa).

The region spanning 23-219 (QVPEIAFAGR…NDKIIELLGL (197 aa)) is the EngB-type G domain. Residues 31–38 (GRSNAGKS), 58–62 (GRTQH), 92–95 (DLPG), 159–162 (TKSD), and 193–200 (FTAQMFSA) each bind GTP. Residues serine 38 and threonine 60 each coordinate Mg(2+).

This sequence belongs to the TRAFAC class TrmE-Era-EngA-EngB-Septin-like GTPase superfamily. EngB GTPase family. Mg(2+) is required as a cofactor.

Necessary for normal cell division and for the maintenance of normal septation. The chain is Probable GTP-binding protein EngB from Janthinobacterium sp. (strain Marseille) (Minibacterium massiliensis).